The sequence spans 395 residues: Putative transport protein sll0063 (395 aa).

A run of 8 helical transmembrane segments spans residues 24-44 (LNAITRLLVLVLGAPLMVLNA), 50-70 (IFGYFESLFVISLIASVIAFL), 91-111 (FVFLTALIIFTALGVTLIPLA), 180-200 (VFTVVRLLDVLLTIILTFYLL), 245-265 (ALGLISGFLLLKVPFGLLFGL), 269-289 (VMALIPFGGSVGIVLVTFLVA), 295-315 (MALQLLAVALVIQQIVENGIA), and 328-348 (FWVLISLLTGARIGGLLGVIV).

It belongs to the autoinducer-2 exporter (AI-2E) (TC 2.A.86) family.

The protein localises to the cell membrane. The sequence is that of Putative transport protein sll0063 from Synechocystis sp. (strain ATCC 27184 / PCC 6803 / Kazusa).